The chain runs to 379 residues: Homoserine O-acetyltransferase (379 aa).

An AB hydrolase-1 domain is found at 52 to 356 (NVVVVLHALT…VYGHDGFLVE (305 aa)). S157 (nucleophile) is an active-site residue. Residue R227 participates in substrate binding. Catalysis depends on residues D320 and H350. D351 serves as a coordination point for substrate.

It belongs to the AB hydrolase superfamily. MetX family. Homodimer.

The protein localises to the cytoplasm. The enzyme catalyses L-homoserine + acetyl-CoA = O-acetyl-L-homoserine + CoA. The protein operates within amino-acid biosynthesis; L-methionine biosynthesis via de novo pathway; O-acetyl-L-homoserine from L-homoserine: step 1/1. Its function is as follows. Transfers an acetyl group from acetyl-CoA to L-homoserine, forming acetyl-L-homoserine. This chain is Homoserine O-acetyltransferase, found in Mycobacterium tuberculosis (strain CDC 1551 / Oshkosh).